Consider the following 1410-residue polypeptide: DNA-directed RNA polymerase subunit beta' (1410 aa).

Zn(2+) is bound by residues Cys70, Cys72, Cys85, and Cys88. 3 residues coordinate Mg(2+): Asp460, Asp462, and Asp464. Zn(2+) is bound by residues Cys814, Cys888, Cys895, and Cys898.

Belongs to the RNA polymerase beta' chain family. As to quaternary structure, the RNAP catalytic core consists of 2 alpha, 1 beta, 1 beta' and 1 omega subunit. When a sigma factor is associated with the core the holoenzyme is formed, which can initiate transcription. It depends on Mg(2+) as a cofactor. Zn(2+) serves as cofactor.

It carries out the reaction RNA(n) + a ribonucleoside 5'-triphosphate = RNA(n+1) + diphosphate. Functionally, DNA-dependent RNA polymerase catalyzes the transcription of DNA into RNA using the four ribonucleoside triphosphates as substrates. The polypeptide is DNA-directed RNA polymerase subunit beta' (Shewanella denitrificans (strain OS217 / ATCC BAA-1090 / DSM 15013)).